The sequence spans 428 residues: Adenylosuccinate synthetase (428 aa).

Residues 12 to 18 and 40 to 42 contribute to the GTP site; these read GDEGKGK and GHT. Aspartate 13 acts as the Proton acceptor in catalysis. Aspartate 13 and glycine 40 together coordinate Mg(2+). IMP contacts are provided by residues 13–16, 38–41, threonine 128, arginine 142, glutamine 223, threonine 238, and arginine 302; these read DEGK and NAGH. The active-site Proton donor is the histidine 41. Position 298–304 (298–304) interacts with substrate; sequence VTTKRPR. Residues arginine 304, 330–332, and 412–414 contribute to the GTP site; these read KLD and GVG.

Belongs to the adenylosuccinate synthetase family. As to quaternary structure, homodimer. The cofactor is Mg(2+).

The protein resides in the cytoplasm. It catalyses the reaction IMP + L-aspartate + GTP = N(6)-(1,2-dicarboxyethyl)-AMP + GDP + phosphate + 2 H(+). It functions in the pathway purine metabolism; AMP biosynthesis via de novo pathway; AMP from IMP: step 1/2. Functionally, plays an important role in the de novo pathway of purine nucleotide biosynthesis. Catalyzes the first committed step in the biosynthesis of AMP from IMP. This is Adenylosuccinate synthetase from Cutibacterium acnes (strain DSM 16379 / KPA171202) (Propionibacterium acnes).